The sequence spans 339 residues: NADH-quinone oxidoreductase subunit H (339 aa).

9 helical membrane-spanning segments follow: residues 10–30 (FPLIIIALKVVAITVPLILCV), 50–70 (PNVVGPFGLLQPIADAVKLLF), 82–102 (ILFILAPMITFILSLIGWAVV), 115–135 (VGVLYILAISSLSVYGIIIAG), 161–181 (MGLVIITVLLTTGTLNLSGII), 187–207 (IPWWIDLMLLPMGVVFFISVL), 235–255 (MGFALFFLGEYANMILVSAMT), 275–295 (IPGFFWFAFKVGFLLFCFLWI), and 310–330 (LGWKVLLPLTLFWVVLVSSVL).

It belongs to the complex I subunit 1 family. NDH-1 is composed of 14 different subunits. Subunits NuoA, H, J, K, L, M, N constitute the membrane sector of the complex.

Its subcellular location is the cell inner membrane. The catalysed reaction is a quinone + NADH + 5 H(+)(in) = a quinol + NAD(+) + 4 H(+)(out). In terms of biological role, NDH-1 shuttles electrons from NADH, via FMN and iron-sulfur (Fe-S) centers, to quinones in the respiratory chain. The immediate electron acceptor for the enzyme in this species is believed to be ubiquinone. Couples the redox reaction to proton translocation (for every two electrons transferred, four hydrogen ions are translocated across the cytoplasmic membrane), and thus conserves the redox energy in a proton gradient. This subunit may bind ubiquinone. This is NADH-quinone oxidoreductase subunit H from Rickettsia canadensis (strain McKiel).